The sequence spans 209 residues: ATP-dependent Clp protease proteolytic subunit (209 aa).

S103 serves as the catalytic Nucleophile. The active site involves H128.

Belongs to the peptidase S14 family. Fourteen ClpP subunits assemble into 2 heptameric rings which stack back to back to give a disk-like structure with a central cavity, resembling the structure of eukaryotic proteasomes.

It is found in the cytoplasm. The enzyme catalyses Hydrolysis of proteins to small peptides in the presence of ATP and magnesium. alpha-casein is the usual test substrate. In the absence of ATP, only oligopeptides shorter than five residues are hydrolyzed (such as succinyl-Leu-Tyr-|-NHMec, and Leu-Tyr-Leu-|-Tyr-Trp, in which cleavage of the -Tyr-|-Leu- and -Tyr-|-Trp bonds also occurs).. Cleaves peptides in various proteins in a process that requires ATP hydrolysis. Has a chymotrypsin-like activity. Plays a major role in the degradation of misfolded proteins. The sequence is that of ATP-dependent Clp protease proteolytic subunit from Lawsonia intracellularis (strain PHE/MN1-00).